Consider the following 88-residue polypeptide: Homeobox protein knotted-1-like 1 (88 aa).

Residues 4–24 (ELKLELKQGFKSRIEDVREEI) form the ELK domain. The homeobox; TALE-type DNA-binding region spans 25–88 (LRKRRAGKLP…NQRKRNWHNN (64 aa)).

The protein belongs to the TALE/KNOX homeobox family. As to expression, highly expressed in the roots.

The protein resides in the nucleus. This chain is Homeobox protein knotted-1-like 1 (KNOX1), found in Zea mays (Maize).